The following is a 41-amino-acid chain: MKVRSSIKSLKNRHRDCQVVKRRGRVYVINKTDPRFKARAG.

It belongs to the bacterial ribosomal protein bL36 family.

The protein is Large ribosomal subunit protein bL36 of Maricaulis maris (strain MCS10) (Caulobacter maris).